The sequence spans 328 residues: Mitochondrial thiamine pyrophosphate carrier 1 (328 aa).

Solcar repeat units lie at residues 12-110, 120-208, and 221-316; these read GTRR…TTQL, PQPI…LRPV, and PPGS…ALKL. The next 6 helical transmembrane spans lie at 17–37, 79–99, 126–146, 185–205, 227–247, and 291–308; these read VVLA…PLDV, LTGL…YGGI, FISG…LDLL, SAAV…YEAL, AAAG…LDLV, and GLTV…VTMW.

Belongs to the mitochondrial carrier (TC 2.A.29) family.

The protein localises to the mitochondrion inner membrane. Its function is as follows. Mitochondrial transporter that mediates uptake of thiamine pyrophosphate (ThPP) into mitochondria. This is Mitochondrial thiamine pyrophosphate carrier 1 (tpc1) from Emericella nidulans (strain FGSC A4 / ATCC 38163 / CBS 112.46 / NRRL 194 / M139) (Aspergillus nidulans).